The following is a 162-amino-acid chain: Beta-carotene hydroxylase (162 aa).

Positions valine 8 to phenylalanine 135 constitute a Fatty acid hydroxylase domain.

This sequence belongs to the sterol desaturase family.

It carries out the reaction all-trans-beta-carotene + 4 reduced [2Fe-2S]-[ferredoxin] + 2 O2 + 4 H(+) = all-trans-zeaxanthin + 4 oxidized [2Fe-2S]-[ferredoxin] + 2 H2O. It participates in carotenoid biosynthesis; astaxanthin biosynthesis. In terms of biological role, catalyzes the hydroxylation reaction from beta-carotene to zeaxanthin via beta-cryptoxanthin. This is Beta-carotene hydroxylase (crtZ) from Paracoccus sp. (strain N81106 / MBIC 01143) (Agrobacterium aurantiacum).